The chain runs to 281 residues: Ribosomal RNA small subunit methyltransferase A (281 aa).

The S-adenosyl-L-methionine site is built by histidine 25, leucine 27, glycine 52, glutamate 74, aspartate 100, and asparagine 119.

The protein belongs to the class I-like SAM-binding methyltransferase superfamily. rRNA adenine N(6)-methyltransferase family. RsmA subfamily.

The protein localises to the cytoplasm. It carries out the reaction adenosine(1518)/adenosine(1519) in 16S rRNA + 4 S-adenosyl-L-methionine = N(6)-dimethyladenosine(1518)/N(6)-dimethyladenosine(1519) in 16S rRNA + 4 S-adenosyl-L-homocysteine + 4 H(+). Functionally, specifically dimethylates two adjacent adenosines (A1518 and A1519) in the loop of a conserved hairpin near the 3'-end of 16S rRNA in the 30S particle. May play a critical role in biogenesis of 30S subunits. In Paramagnetospirillum magneticum (strain ATCC 700264 / AMB-1) (Magnetospirillum magneticum), this protein is Ribosomal RNA small subunit methyltransferase A.